The following is a 586-amino-acid chain: Succinate dehydrogenase flavoprotein subunit (586 aa).

FAD contacts are provided by residues 10 to 15 and 33 to 48; these read GGGLAG and SIVP…AQGG. Residue histidine 41 is modified to Tele-8alpha-FAD histidine. Positions 236 and 250 each coordinate substrate. Residue arginine 285 is the Proton acceptor of the active site. Residue histidine 352 coordinates substrate. Glutamate 376 is a binding site for FAD. Arginine 386 contributes to the substrate binding site. Residue 391 to 392 participates in FAD binding; the sequence is SL.

This sequence belongs to the FAD-dependent oxidoreductase 2 family. FRD/SDH subfamily. As to quaternary structure, in B.subtilis succinate dehydrogenase forms part of an enzyme complex containing three subunits: a flavoprotein, an iron-sulfur protein and cytochrome b-558. Interacts with FloT. Requires FAD as cofactor.

It localises to the cell membrane. It is found in the membrane raft. The catalysed reaction is a quinone + succinate = fumarate + a quinol. Its pathway is carbohydrate metabolism; tricarboxylic acid cycle; fumarate from succinate (bacterial route): step 1/1. The polypeptide is Succinate dehydrogenase flavoprotein subunit (sdhA) (Bacillus subtilis (strain 168)).